Reading from the N-terminus, the 26-residue chain is Dermaseptin-J1 (26 aa).

Position 26 is a valine amide (Val-26).

As to expression, expressed by the skin glands.

The protein localises to the secreted. In terms of biological role, has antimicrobial activity. In Phasmahyla jandaia (Jandaia leaf frog), this protein is Dermaseptin-J1.